A 264-amino-acid chain; its full sequence is MRADVVTIFPAYLEPLRLSLVGRAQERGTLEVRTHDLRAWTSDVHRTVDDAPYGGGPGMVMRPEPWDAALSEIAASDPARRPRVVVPTPAGRPFSQRHAEELAQEPWLVFCCGRYEGIDARVIETWADDEISIGDYVLAGGEVATLVILEAVARLLPGVLGNSASAADDSFSDGLLEAPAYTRPQVWRGVEVPAVLRSGDHAAVARWRRAQALRRTVARRPDLVAQAELSDADRAVLDAVAAEVQQAATPGGQRRPPWHRDSRA.

Residues glycine 113 and 133 to 138 contribute to the S-adenosyl-L-methionine site; that span reads IGDYVL. Positions 244–264 are disordered; sequence VQQAATPGGQRRPPWHRDSRA.

The protein belongs to the RNA methyltransferase TrmD family. Homodimer.

The protein resides in the cytoplasm. It catalyses the reaction guanosine(37) in tRNA + S-adenosyl-L-methionine = N(1)-methylguanosine(37) in tRNA + S-adenosyl-L-homocysteine + H(+). Its function is as follows. Specifically methylates guanosine-37 in various tRNAs. The protein is tRNA (guanine-N(1)-)-methyltransferase of Frankia alni (strain DSM 45986 / CECT 9034 / ACN14a).